The primary structure comprises 155 residues: Small ribosomal subunit protein uS7cz/uS7cy (155 aa).

The protein belongs to the universal ribosomal protein uS7 family. In terms of assembly, part of the 30S ribosomal subunit.

It localises to the plastid. The protein localises to the chloroplast. In terms of biological role, one of the primary rRNA binding proteins, it binds directly to 16S rRNA where it nucleates assembly of the head domain of the 30S subunit. This is Small ribosomal subunit protein uS7cz/uS7cy (rps7-A) from Populus trichocarpa (Western balsam poplar).